Consider the following 199-residue polypeptide: Chaperone protein TorD (199 aa).

This sequence belongs to the TorD/DmsD family. TorD subfamily.

The protein resides in the cytoplasm. Functionally, involved in the biogenesis of TorA. Acts on TorA before the insertion of the molybdenum cofactor and, as a result, probably favors a conformation of the apoenzyme that is competent for acquiring the cofactor. This Escherichia coli O7:K1 (strain IAI39 / ExPEC) protein is Chaperone protein TorD.